A 509-amino-acid chain; its full sequence is Maturase K (509 aa).

The protein belongs to the intron maturase 2 family. MatK subfamily.

Its subcellular location is the plastid. The protein localises to the chloroplast. Its function is as follows. Usually encoded in the trnK tRNA gene intron. Probably assists in splicing its own and other chloroplast group II introns. The sequence is that of Maturase K from Vachellia farnesiana (Sweet acacia).